The sequence spans 200 residues: NAD(P)H dehydrogenase (quinone) (200 aa).

A Flavodoxin-like domain is found at 4–191 (VLVLYYSMYG…DIARFQGKHV (188 aa)). Residues 10–15 (SMYGHI) and 79–81 (TRF) contribute to the FMN site. Residue tyrosine 12 participates in NAD(+) binding. Residue tryptophan 99 coordinates substrate. Residues 114 to 120 (STGTQHG) and histidine 135 contribute to the FMN site.

It belongs to the WrbA family. The cofactor is FMN.

The enzyme catalyses a quinone + NADH + H(+) = a quinol + NAD(+). The catalysed reaction is a quinone + NADPH + H(+) = a quinol + NADP(+). The polypeptide is NAD(P)H dehydrogenase (quinone) (Paraburkholderia phytofirmans (strain DSM 17436 / LMG 22146 / PsJN) (Burkholderia phytofirmans)).